The following is a 363-amino-acid chain: Pyrimidine monooxygenase RutA (363 aa).

FMN is bound by residues 49 to 50, Asn-115, Glu-124, 140 to 141, and Ser-190; these read IK and RY.

Belongs to the NtaA/SnaA/DszA monooxygenase family. RutA subfamily.

The enzyme catalyses uracil + FMNH2 + NADH + O2 = (Z)-3-ureidoacrylate + FMN + NAD(+) + H2O + H(+). It catalyses the reaction thymine + FMNH2 + NADH + O2 = (Z)-2-methylureidoacrylate + FMN + NAD(+) + H2O + H(+). Its function is as follows. Catalyzes the pyrimidine ring opening between N-3 and C-4 by an unusual flavin hydroperoxide-catalyzed mechanism, adding oxygen atoms in the process to yield ureidoacrylate peracid, that immediately reacts with FMN forming ureidoacrylate and FMN-N(5)-oxide. The FMN-N(5)-oxide reacts spontaneously with NADH to produce FMN. Requires the flavin reductase RutF to regenerate FMN in vivo. The polypeptide is Pyrimidine monooxygenase RutA (Escherichia coli O6:K15:H31 (strain 536 / UPEC)).